We begin with the raw amino-acid sequence, 229 residues long: Nisin biosynthesis regulatory protein NisR (229 aa).

Positions 4 to 117 constitute a Response regulatory domain; sequence KILIVDDDQE…QLVAKVEANI (114 aa). 4-aspartylphosphate is present on aspartate 53. A DNA-binding region (ompR/PhoB-type) is located at residues 132–229; the sequence is EIRRDLGPIT…VRGLGYQWHG (98 aa).

Phosphorylated by NisK.

Functionally, member of the two-component regulatory system NisK/NisR involved in the regulation of the biosynthesis of lantibiotic nisin. NisR may function as a regulatory protein. This is Nisin biosynthesis regulatory protein NisR (nisR) from Lactococcus lactis subsp. lactis (Streptococcus lactis).